We begin with the raw amino-acid sequence, 304 residues long: Glycine--tRNA ligase alpha subunit (304 aa).

This sequence belongs to the class-II aminoacyl-tRNA synthetase family. In terms of assembly, tetramer of two alpha and two beta subunits.

Its subcellular location is the cytoplasm. The enzyme catalyses tRNA(Gly) + glycine + ATP = glycyl-tRNA(Gly) + AMP + diphosphate. The sequence is that of Glycine--tRNA ligase alpha subunit from Actinobacillus pleuropneumoniae serotype 3 (strain JL03).